Consider the following 471-residue polypeptide: ATP synthase subunit beta 2 (471 aa).

157 to 164 serves as a coordination point for ATP; that stretch reads GGAGVGKT.

It belongs to the ATPase alpha/beta chains family. F-type ATPases have 2 components, CF(1) - the catalytic core - and CF(0) - the membrane proton channel. CF(1) has five subunits: alpha(3), beta(3), gamma(1), delta(1), epsilon(1). CF(0) has three main subunits: a(1), b(2) and c(9-12). The alpha and beta chains form an alternating ring which encloses part of the gamma chain. CF(1) is attached to CF(0) by a central stalk formed by the gamma and epsilon chains, while a peripheral stalk is formed by the delta and b chains.

It is found in the cell inner membrane. It carries out the reaction ATP + H2O + 4 H(+)(in) = ADP + phosphate + 5 H(+)(out). Its function is as follows. Produces ATP from ADP in the presence of a proton gradient across the membrane. The catalytic sites are hosted primarily by the beta subunits. The sequence is that of ATP synthase subunit beta 2 from Pelobacter propionicus (strain DSM 2379 / NBRC 103807 / OttBd1).